Reading from the N-terminus, the 1323-residue chain is Phosphoribosylformylglycinamidine synthase (1323 aa).

ATP contacts are provided by residues 312–323, 391–393, and A691; these read GAATGSGGEIRD and NGY. D692, E733, N737, and D903 together coordinate Mg(2+). S905 lines the ATP pocket. One can recognise a Glutamine amidotransferase type-1 domain in the interval 1062–1306; the sequence is VAILREQGVN…YPHSKASEWG (245 aa). C1156 serves as the catalytic Nucleophile. Active-site residues include H1284 and E1286.

It in the N-terminal section; belongs to the FGAMS family.

The protein localises to the cytoplasm. It catalyses the reaction N(2)-formyl-N(1)-(5-phospho-beta-D-ribosyl)glycinamide + L-glutamine + ATP + H2O = 2-formamido-N(1)-(5-O-phospho-beta-D-ribosyl)acetamidine + L-glutamate + ADP + phosphate + H(+). Its pathway is purine metabolism; IMP biosynthesis via de novo pathway; 5-amino-1-(5-phospho-D-ribosyl)imidazole from N(2)-formyl-N(1)-(5-phospho-D-ribosyl)glycinamide: step 1/2. Phosphoribosylformylglycinamidine synthase involved in the purines biosynthetic pathway. Catalyzes the ATP-dependent conversion of formylglycinamide ribonucleotide (FGAR) and glutamine to yield formylglycinamidine ribonucleotide (FGAM) and glutamate. This chain is Phosphoribosylformylglycinamidine synthase (ade3), found in Schizosaccharomyces pombe (strain 972 / ATCC 24843) (Fission yeast).